A 154-amino-acid polypeptide reads, in one-letter code: Melatonin receptor type 1A (154 aa).

The Cytoplasmic segment spans residues 1–19 (YCYICHSLKYDRWYSNRNS). The helical transmembrane segment at 20-40 (LCCVFLICVLTLVAIVPNLCM) threads the bilayer. The Extracellular segment spans residues 41–62 (GTLQYDPRIYSCTFAQSVSSAY). The helical transmembrane segment at 63–83 (TIAVVVFHFLVPMVIVIFRYL) threads the bilayer. Over 84-115 (RIWVLVLQIRWRAKPENNPRLKPQDFRNFVTM) the chain is Cytoplasmic. A helical membrane pass occupies residues 116–136 (FVVFVLFAICWAPLNFIGLAV). At 137–149 (ASDPASMAPRIPE) the chain is on the extracellular side.

This sequence belongs to the G-protein coupled receptor 1 family.

The protein localises to the cell membrane. High affinity receptor for melatonin. Likely to mediate the reproductive and circadian actions of melatonin. The activity of this receptor is mediated by pertussis toxin sensitive G proteins that inhibit adenylate cyclase activity. The chain is Melatonin receptor type 1A (MTNR1A) from Sus scrofa (Pig).